The chain runs to 338 residues: Anthranilate phosphoribosyltransferase (338 aa).

Residues Gly81, 84–85 (GD), Thr89, 91–94 (NIST), 109–117 (KHGNRALSS), and Ala121 contribute to the 5-phospho-alpha-D-ribose 1-diphosphate site. Position 81 (Gly81) interacts with anthranilate. Ser93 serves as a coordination point for Mg(2+). An anthranilate-binding site is contributed by Asn112. Arg167 contributes to the anthranilate binding site. Residues Asp225 and Glu226 each contribute to the Mg(2+) site.

This sequence belongs to the anthranilate phosphoribosyltransferase family. Homodimer. Mg(2+) serves as cofactor.

It carries out the reaction N-(5-phospho-beta-D-ribosyl)anthranilate + diphosphate = 5-phospho-alpha-D-ribose 1-diphosphate + anthranilate. It functions in the pathway amino-acid biosynthesis; L-tryptophan biosynthesis; L-tryptophan from chorismate: step 2/5. Catalyzes the transfer of the phosphoribosyl group of 5-phosphorylribose-1-pyrophosphate (PRPP) to anthranilate to yield N-(5'-phosphoribosyl)-anthranilate (PRA). This is Anthranilate phosphoribosyltransferase from Rhizobium etli (strain ATCC 51251 / DSM 11541 / JCM 21823 / NBRC 15573 / CFN 42).